The primary structure comprises 336 residues: Ferrochelatase (336 aa).

Positions 206 and 287 each coordinate Fe cation.

It belongs to the ferrochelatase family.

The protein resides in the cytoplasm. It carries out the reaction heme b + 2 H(+) = protoporphyrin IX + Fe(2+). It participates in porphyrin-containing compound metabolism; protoheme biosynthesis; protoheme from protoporphyrin-IX: step 1/1. Catalyzes the ferrous insertion into protoporphyrin IX. The chain is Ferrochelatase from Neisseria gonorrhoeae (strain ATCC 700825 / FA 1090).